The chain runs to 265 residues: GTP cyclohydrolase FolE2 (265 aa).

The protein belongs to the GTP cyclohydrolase IV family.

It carries out the reaction GTP + H2O = 7,8-dihydroneopterin 3'-triphosphate + formate + H(+). It functions in the pathway cofactor biosynthesis; 7,8-dihydroneopterin triphosphate biosynthesis; 7,8-dihydroneopterin triphosphate from GTP: step 1/1. Its function is as follows. Converts GTP to 7,8-dihydroneopterin triphosphate. The protein is GTP cyclohydrolase FolE2 of Bordetella avium (strain 197N).